The primary structure comprises 573 residues: Putative inorganic phosphate transporter C1683.01 (573 aa).

6 helical membrane passes run 48 to 68 (MMLA…INLV), 100 to 120 (AASN…GDFF), 124 to 144 (FVYG…IAMP), 154 to 174 (MMWV…DYPM), 194 to 214 (LIFA…IILL), and 230 to 250 (LEGV…GVLI). The segment covering 261 to 270 (FKNSQQLNSG) has biased composition (polar residues). Disordered regions lie at residues 261 to 280 (FKNS…TSLN) and 290 to 312 (PSVT…RSNT). 6 helical membrane-spanning segments follow: residues 348 to 368 (HLLG…GVNL), 397 to 417 (LIIA…LVEI), 422 to 442 (WIQL…AGRW), 451 to 471 (FACF…TTFI), 487 to 507 (GISA…FNFL), and 510 to 530 (IIGY…GILF).

It belongs to the major facilitator superfamily. Sugar transporter (TC 2.A.1.1) family.

The protein resides in the endoplasmic reticulum membrane. Functionally, high-affinity transporter for external inorganic phosphate. This chain is Putative inorganic phosphate transporter C1683.01, found in Schizosaccharomyces pombe (strain 972 / ATCC 24843) (Fission yeast).